The following is a 365-amino-acid chain: MFEINPIRNKISDLTERTQVLRGYLDFDAKVERLEEVNAELEQPDVWNEPEKAQALGKERVALEGVVNTIHTLDQGLEDVEGLLELAIEAEDEATFHEAVAELEELEQQLAKLEFRRMFSGQHDAADCYVDLQAGSGGTEAQDWTEMLLRMYLRWAESKGFKTELMEVSDGDVAGIKSATIKVSGEYAFGWLRTETGIHRLVRKSPFDSNNRRHTSFSAAFVYPEIDDDIDIDINPADLRIDVYRASGAGGQHVNKTESAVRITHIPSGIVVQCQNDRSQHKNKDQCMKQLKAKLYEMELQKKNADKQAMEDNKSDIGWGSQIRSYVLDDSRIKDLRTGVENRNTQAVLDGDLDRFIEASLKAGL.

Gln252 is modified (N5-methylglutamine).

This sequence belongs to the prokaryotic/mitochondrial release factor family. Methylated by PrmC. Methylation increases the termination efficiency of RF2.

It localises to the cytoplasm. Its function is as follows. Peptide chain release factor 2 directs the termination of translation in response to the peptide chain termination codons UGA and UAA. The chain is Peptide chain release factor 2 from Pasteurella multocida (strain Pm70).